Reading from the N-terminus, the 315-residue chain is 4-hydroxy-3-methylbut-2-enyl diphosphate reductase (315 aa).

A [4Fe-4S] cluster-binding site is contributed by cysteine 12. (2E)-4-hydroxy-3-methylbut-2-enyl diphosphate is bound by residues histidine 41 and histidine 74. Dimethylallyl diphosphate contacts are provided by histidine 41 and histidine 74. Isopentenyl diphosphate-binding residues include histidine 41 and histidine 74. Position 96 (cysteine 96) interacts with [4Fe-4S] cluster. Histidine 124 is a binding site for (2E)-4-hydroxy-3-methylbut-2-enyl diphosphate. Histidine 124 serves as a coordination point for dimethylallyl diphosphate. Isopentenyl diphosphate is bound at residue histidine 124. The active-site Proton donor is glutamate 126. Threonine 168 provides a ligand contact to (2E)-4-hydroxy-3-methylbut-2-enyl diphosphate. Cysteine 198 is a binding site for [4Fe-4S] cluster. (2E)-4-hydroxy-3-methylbut-2-enyl diphosphate contacts are provided by serine 226, serine 227, asparagine 228, and serine 270. Dimethylallyl diphosphate contacts are provided by serine 226, serine 227, asparagine 228, and serine 270. Isopentenyl diphosphate contacts are provided by serine 226, serine 227, asparagine 228, and serine 270.

The protein belongs to the IspH family. [4Fe-4S] cluster is required as a cofactor.

The enzyme catalyses isopentenyl diphosphate + 2 oxidized [2Fe-2S]-[ferredoxin] + H2O = (2E)-4-hydroxy-3-methylbut-2-enyl diphosphate + 2 reduced [2Fe-2S]-[ferredoxin] + 2 H(+). The catalysed reaction is dimethylallyl diphosphate + 2 oxidized [2Fe-2S]-[ferredoxin] + H2O = (2E)-4-hydroxy-3-methylbut-2-enyl diphosphate + 2 reduced [2Fe-2S]-[ferredoxin] + 2 H(+). Its pathway is isoprenoid biosynthesis; dimethylallyl diphosphate biosynthesis; dimethylallyl diphosphate from (2E)-4-hydroxy-3-methylbutenyl diphosphate: step 1/1. The protein operates within isoprenoid biosynthesis; isopentenyl diphosphate biosynthesis via DXP pathway; isopentenyl diphosphate from 1-deoxy-D-xylulose 5-phosphate: step 6/6. In terms of biological role, catalyzes the conversion of 1-hydroxy-2-methyl-2-(E)-butenyl 4-diphosphate (HMBPP) into a mixture of isopentenyl diphosphate (IPP) and dimethylallyl diphosphate (DMAPP). Acts in the terminal step of the DOXP/MEP pathway for isoprenoid precursor biosynthesis. The chain is 4-hydroxy-3-methylbut-2-enyl diphosphate reductase from Pseudomonas entomophila (strain L48).